Consider the following 358-residue polypeptide: tRNA pseudouridine synthase D (358 aa).

The active-site Nucleophile is D84. In terms of domain architecture, TRUD spans 161 to 312; the sequence is GTPNYFGPQR…RRSLRLMVAD (152 aa).

It belongs to the pseudouridine synthase TruD family.

It catalyses the reaction uridine(13) in tRNA = pseudouridine(13) in tRNA. Its function is as follows. Responsible for synthesis of pseudouridine from uracil-13 in transfer RNAs. The protein is tRNA pseudouridine synthase D of Nitrosococcus oceani (strain ATCC 19707 / BCRC 17464 / JCM 30415 / NCIMB 11848 / C-107).